We begin with the raw amino-acid sequence, 373 residues long: Cobalt-precorrin-5B C(1)-methyltransferase (373 aa).

This sequence belongs to the CbiD family.

It catalyses the reaction Co-precorrin-5B + S-adenosyl-L-methionine = Co-precorrin-6A + S-adenosyl-L-homocysteine. It participates in cofactor biosynthesis; adenosylcobalamin biosynthesis; cob(II)yrinate a,c-diamide from sirohydrochlorin (anaerobic route): step 6/10. In terms of biological role, catalyzes the methylation of C-1 in cobalt-precorrin-5B to form cobalt-precorrin-6A. This chain is Cobalt-precorrin-5B C(1)-methyltransferase, found in Polaromonas sp. (strain JS666 / ATCC BAA-500).